A 564-amino-acid polypeptide reads, in one-letter code: Proline--tRNA ligase (564 aa).

The protein belongs to the class-II aminoacyl-tRNA synthetase family. ProS type 1 subfamily. Homodimer.

It localises to the cytoplasm. It carries out the reaction tRNA(Pro) + L-proline + ATP = L-prolyl-tRNA(Pro) + AMP + diphosphate. Its function is as follows. Catalyzes the attachment of proline to tRNA(Pro) in a two-step reaction: proline is first activated by ATP to form Pro-AMP and then transferred to the acceptor end of tRNA(Pro). As ProRS can inadvertently accommodate and process non-cognate amino acids such as alanine and cysteine, to avoid such errors it has two additional distinct editing activities against alanine. One activity is designated as 'pretransfer' editing and involves the tRNA(Pro)-independent hydrolysis of activated Ala-AMP. The other activity is designated 'posttransfer' editing and involves deacylation of mischarged Ala-tRNA(Pro). The misacylated Cys-tRNA(Pro) is not edited by ProRS. The polypeptide is Proline--tRNA ligase (Xylella fastidiosa (strain Temecula1 / ATCC 700964)).